The chain runs to 953 residues: Coatomer subunit beta-1 (953 aa).

HEAT repeat units follow at residues Glu49 to Ala87, Pro93 to Pro127, Glu128 to Gly165, Asp314 to Val351, and Glu393 to Lys430.

As to quaternary structure, oligomeric complex that consists of at least the alpha, beta, beta', gamma, delta, epsilon and zeta subunits.

Its subcellular location is the cytoplasm. The protein localises to the golgi apparatus membrane. It localises to the cytoplasmic vesicle. The protein resides in the COPI-coated vesicle membrane. Functionally, the coatomer is a cytosolic protein complex that binds to dilysine motifs and reversibly associates with Golgi non-clathrin-coated vesicles, which further mediate biosynthetic protein transport from the ER, via the Golgi up to the trans Golgi network. Coatomer complex is required for budding from Golgi membranes, and is essential for the retrograde Golgi-to-ER transport of dilysine-tagged proteins. This Oryza sativa subsp. japonica (Rice) protein is Coatomer subunit beta-1.